An 84-amino-acid polypeptide reads, in one-letter code: uncharacterized protein (84 aa).

Basic residues-rich tracts occupy residues 1–15 and 67–84; these read MPPH…HGHH and HHGH…GHFF. 2 disordered regions span residues 1-22 and 64-84; these read MPPH…TYTT and TSHH…GHFF.

This is an uncharacterized protein from Dictyostelium discoideum (Social amoeba).